The chain runs to 55 residues: Large ribosomal subunit protein bL33 (55 aa).

In terms of processing, the protein is methylated on either Ala-2 or Lys-3.

The protein is Large ribosomal subunit protein bL33 of Rhodopseudomonas palustris (strain ATCC BAA-98 / CGA009).